Consider the following 640-residue polypeptide: F-box only protein 43 (640 aa).

At threonine 176 the chain carries Phosphothreonine. Residue serine 275 is modified to Phosphoserine. The interval 328 to 354 is disordered; sequence LQEQGQSEDEMQTVHPNSDSGVLESLQ. Residues 423 to 480 enclose the F-box domain; the sequence is MGIEQLDILTELQYRNLKHILAMVLESLTSESLYSAWNVSRNWREIVAQDKKANRRRK. Residues 568–616 form a ZBR-type zinc finger; the sequence is ALKPCPRCQSPAKYQPHKKRGLCSRLACGFDFCVLCLCAYHGSEDCRRG. Zn(2+) is bound by residues cysteine 572, cysteine 575, cysteine 590, cysteine 595, cysteine 600, cysteine 603, histidine 608, and cysteine 613. The disordered stretch occupies residues 615 to 640; the sequence is RGSAKARGSKDVLPGSAQSKRNLKRL.

Part of a SCF (SKP1-cullin-F-box) protein ligase complex. Interaction with SKP1 does not occur. Interacts with ANAPC2; the interaction is direct, ANAPC4, CDC16, CDC23; the interaction is direct, ANAPC10; the interaction is direct and CDC26, during spermatogenesis. Interacts with CDC20. Post-translationally, phosphorylated on Thr-176 and Ser-275 in response to calcium, which is a prerequisite for ubiquitination and proteasomal degradation. In terms of processing, ubiquitinated in response to calcium, which promotes proteasomal degradation. Present in testis and ovary (at protein level). Expression is high in immature oocytes, and diminishes after oocyte activation. Expressed post-meiotically in spermatids and sperm.

Its pathway is protein modification; protein ubiquitination. In terms of biological role, required to establish and maintain the arrest of oocytes at the second meiotic metaphase until fertilization. Acts by inhibiting the anaphase-promoting complex/cyclosome (APC/C) ubiquitin ligase. Probably recognizes and binds to some phosphorylated proteins and promotes their ubiquitination and degradation. Plays a vital role in modulating the ubiquitilation of CCNB1 and CDK1 during gametogenesis. The chain is F-box only protein 43 (Fbxo43) from Mus musculus (Mouse).